The primary structure comprises 257 residues: Homeobox protein EMX1 (257 aa).

Residues 159–218 constitute a DNA-binding region (homeobox); that stretch reads PKRIRTAFSPSQLLRLERAFEKNHYVVGAERKQLAGSLSLSETQVKVWFQNRRTKYKRQK. Positions 216–257 are disordered; sequence RQKLEEEGPESEQKKKGSHHINRWRIATKQANGEDIDVTSND. The segment covering 217 to 230 has biased composition (basic and acidic residues); sequence QKLEEEGPESEQKK.

It belongs to the EMX homeobox family. In terms of assembly, interacts with WRD11 (via the N-terminal and the central portion of the protein); the interaction associates EMX1 with GLI3. In terms of tissue distribution, cerebral cortex. Expressed in the olfactory bulbs.

It localises to the nucleus. Its function is as follows. Transcription factor, which in cooperation with EMX2, acts to generate the boundary between the roof and archipallium in the developing brain. May function in combinations with OTX1/2 to specify cell fates in the developing central nervous system. This is Homeobox protein EMX1 (Emx1) from Mus musculus (Mouse).